Consider the following 346-residue polypeptide: tRNA/tmRNA (uracil-C(5))-methyltransferase (346 aa).

S-adenosyl-L-methionine-binding residues include Gln168, Tyr197, Asn202, Glu218, and Asp278. Cys303 functions as the Nucleophile in the catalytic mechanism. Glu337 functions as the Proton acceptor in the catalytic mechanism.

This sequence belongs to the class I-like SAM-binding methyltransferase superfamily. RNA M5U methyltransferase family. TrmA subfamily.

The catalysed reaction is uridine(54) in tRNA + S-adenosyl-L-methionine = 5-methyluridine(54) in tRNA + S-adenosyl-L-homocysteine + H(+). It carries out the reaction uridine(341) in tmRNA + S-adenosyl-L-methionine = 5-methyluridine(341) in tmRNA + S-adenosyl-L-homocysteine + H(+). Dual-specificity methyltransferase that catalyzes the formation of 5-methyluridine at position 54 (m5U54) in all tRNAs, and that of position 341 (m5U341) in tmRNA (transfer-mRNA). The protein is tRNA/tmRNA (uracil-C(5))-methyltransferase of Campylobacter lari (strain RM2100 / D67 / ATCC BAA-1060).